Here is a 381-residue protein sequence, read N- to C-terminus: Cytochrome b (381 aa).

Transmembrane regions (helical) follow at residues 34-54 (FGSL…FLAM), 78-99 (WLIR…YLHI), 114-134 (WNIG…GYVL), and 179-199 (FFAF…IHLL). Heme b contacts are provided by His84 and His98. Heme b-binding residues include His183 and His197. Position 202 (His202) interacts with a ubiquinone. 4 helical membrane-spanning segments follow: residues 227–247 (YKDL…ALFM), 289–309 (LGGV…PLLH), 321–341 (MTQI…WIGG), and 348–368 (FIMV…IIMP).

The protein belongs to the cytochrome b family. In terms of assembly, the cytochrome bc1 complex contains 3 respiratory subunits (MT-CYB, CYC1 and UQCRFS1), 2 core proteins (UQCRC1 and UQCRC2) and probably 6 low-molecular weight proteins. The cofactor is heme b.

It localises to the mitochondrion inner membrane. Its function is as follows. Component of the ubiquinol-cytochrome c reductase complex (complex III or cytochrome b-c1 complex) that is part of the mitochondrial respiratory chain. The b-c1 complex mediates electron transfer from ubiquinol to cytochrome c. Contributes to the generation of a proton gradient across the mitochondrial membrane that is then used for ATP synthesis. In Carcharhinus plumbeus (Sandbar shark), this protein is Cytochrome b (mt-cyb).